The chain runs to 256 residues: Pimeloyl-[acyl-carrier protein] methyl ester esterase (256 aa).

The AB hydrolase-1 domain occupies 15–242 (HLVLLHGWGL…AAHAPFISHP (228 aa)). Substrate-binding positions include Trp-22, 82-83 (SL), and 143-147 (FLALQ). Ser-82 functions as the Nucleophile in the catalytic mechanism. Catalysis depends on residues Asp-207 and His-235. His-235 lines the substrate pocket.

It belongs to the AB hydrolase superfamily. Carboxylesterase BioH family. As to quaternary structure, monomer.

It is found in the cytoplasm. The enzyme catalyses 6-carboxyhexanoyl-[ACP] methyl ester + H2O = 6-carboxyhexanoyl-[ACP] + methanol + H(+). The protein operates within cofactor biosynthesis; biotin biosynthesis. Functionally, the physiological role of BioH is to remove the methyl group introduced by BioC when the pimeloyl moiety is complete. It allows to synthesize pimeloyl-ACP via the fatty acid synthetic pathway through the hydrolysis of the ester bonds of pimeloyl-ACP esters. This is Pimeloyl-[acyl-carrier protein] methyl ester esterase from Escherichia fergusonii (strain ATCC 35469 / DSM 13698 / CCUG 18766 / IAM 14443 / JCM 21226 / LMG 7866 / NBRC 102419 / NCTC 12128 / CDC 0568-73).